A 234-amino-acid chain; its full sequence is MHSKFFAASLLGLGAAAIPLEGVMEKRSCPAIHVFGARETTASPGYGSSSTVVNGVLSAYPGSTAEAINYPACGGQSSCGGASYSSSVAQGIAAVASAVNSFNSQCPSTKIVLVGYSQGGEIMDVALCGGGDPNQGYTNTAVQLSSSAVNMVKAAIFMGDPMFRAGLSYEVGTCAAGGFDQRPAGFSCPSAAKIKSYCDASDPYCCNGSNAATHQGYGSEYGSQALAFVKSKLG.

An N-terminal signal peptide occupies residues 1-17 (MHSKFFAASLLGLGAAA). Residues 18 to 27 (IPLEGVMEKR) constitute a propeptide that is removed on maturation. Disulfide bonds link Cys29–Cys106 and Cys73–Cys79. The active site involves Ser117. 3 cysteine pairs are disulfide-bonded: Cys128–Cys188, Cys174–Cys206, and Cys198–Cys205. The active site involves Asp202. Asn207 carries N-linked (GlcNAc...) asparagine glycosylation. His214 is an active-site residue.

The protein belongs to the cutinase family. Acetylxylan esterase subfamily. As to quaternary structure, monomer.

It is found in the secreted. It catalyses the reaction Deacetylation of xylans and xylo-oligosaccharides.. It functions in the pathway glycan degradation; xylan degradation. In terms of biological role, degrades acetylated xylans by cleaving acetyl side groups from the hetero-xylan backbone. This chain is Acetylxylan esterase 2 (axe-2), found in Talaromyces purpureogenus (Soft rot fungus).